The following is a 196-amino-acid chain: MKRIGLTGNIGCGKSTVAQMFRELGAYVLDADKLIHSFYRKGHPVYEEVVKTFGKGILDEEGNIDRKKLADIVFKDEEKLRKLEEITHRALYKEIEKITKNLSEDTLFILEASLLVEKGTYKNYDKLIVVYAPYEVCKERAIKRGMSEEDFERRWKKQMPIEEKVKYADYVIDNSGSIEETYKQVKKVYEELTRDP.

In terms of domain architecture, DPCK spans 3–196 (RIGLTGNIGC…KVYEELTRDP (194 aa)). 11-16 (GCGKST) is a binding site for ATP.

This sequence belongs to the CoaE family.

It localises to the cytoplasm. The enzyme catalyses 3'-dephospho-CoA + ATP = ADP + CoA + H(+). It participates in cofactor biosynthesis; coenzyme A biosynthesis; CoA from (R)-pantothenate: step 5/5. Functionally, catalyzes the phosphorylation of the 3'-hydroxyl group of dephosphocoenzyme A to form coenzyme A. In Aquifex aeolicus (strain VF5), this protein is Dephospho-CoA kinase.